Reading from the N-terminus, the 226-residue chain is 6-carboxyhexanoate--CoA ligase (226 aa).

The protein belongs to the BioW family. In terms of assembly, homodimer. The cofactor is Mg(2+).

The enzyme catalyses heptanedioate + ATP + CoA = 6-carboxyhexanoyl-CoA + AMP + diphosphate. The protein operates within metabolic intermediate metabolism; pimeloyl-CoA biosynthesis; pimeloyl-CoA from pimelate: step 1/1. Catalyzes the transformation of pimelate into pimeloyl-CoA with concomitant hydrolysis of ATP to AMP. The sequence is that of 6-carboxyhexanoate--CoA ligase from Methanocaldococcus infernus (strain DSM 11812 / JCM 15783 / ME).